Consider the following 471-residue polypeptide: Glutamate--tRNA ligase (471 aa).

The short motif at Pro9 to Gly19 is the 'HIGH' region element. Positions 98, 100, 125, and 127 each coordinate Zn(2+). The 'KMSKS' region motif lies at Lys237–Arg241. Lys240 is a binding site for ATP.

This sequence belongs to the class-I aminoacyl-tRNA synthetase family. Glutamate--tRNA ligase type 1 subfamily. In terms of assembly, monomer. The cofactor is Zn(2+).

The protein localises to the cytoplasm. It carries out the reaction tRNA(Glu) + L-glutamate + ATP = L-glutamyl-tRNA(Glu) + AMP + diphosphate. Functionally, catalyzes the attachment of glutamate to tRNA(Glu) in a two-step reaction: glutamate is first activated by ATP to form Glu-AMP and then transferred to the acceptor end of tRNA(Glu). In Salmonella enteritidis PT4 (strain P125109), this protein is Glutamate--tRNA ligase.